Consider the following 603-residue polypeptide: Chaperone protein DnaK (603 aa).

Position 175 is a phosphothreonine; by autocatalysis (Thr175). Low complexity predominate over residues 573–586; that stretch reads AQQAQQQNPDNQNN. The interval 573–603 is disordered; the sequence is AQQAQQQNPDNQNNNKDDVTEATVTDDSTKK. The span at 594–603 shows a compositional bias: polar residues; the sequence is ATVTDDSTKK.

It belongs to the heat shock protein 70 family.

Acts as a chaperone. This is Chaperone protein DnaK from Ureaplasma parvum serovar 3 (strain ATCC 27815 / 27 / NCTC 11736).